A 545-amino-acid chain; its full sequence is MVKMRKRLAVACDACRSRRVKCDGQRPSCMGCLSRGLDCSYQRLPEPPATRLETELANVNMRLDYLAMLLSRQSQPQAPPPVLLASARPSSNPLSSHEDSPFRLLATDSIMSVLGLEDHFARRLVQLERASLLASTTTLSRMFFISHQQVTDALIAFSERVHTFYPILPLDFSERYFATLSGPLAPSCQTCLALLVAAIGCIARDPTMGDEYFEAALASLPTVLAECTLASIQCLVFLSIYYCCRLKPCQAHDYCLIASFKIQNLFKSELSVQLDVATSDTWKLDEYIPLPNCRYTWQFSCPPLPGNLAGVSPESASSSSSSISIDSTNSSTSTASDQAQSFFLAEIAMRRMLHRCNSAVAQSSDGRFCYAPSIALELERQLEEWYDYLPASIRFVREPAGGSFNGDQSALSPLSTFLNVQYCCCKLSIYWPAVYQVIQDDKATPQLLEHCQRFIDSYVQLLPRIALAIDKCLIYKWTLSVTFFVTTMAALKVANTAALRAAQHERLHESLALAGTVGWKNTEDSPSLELLRLNLSQHLREAKQK.

Positions 12–39 form a DNA-binding region, zn(2)-C6 fungal-type; the sequence is CDACRSRRVKCDGQRPSCMGCLSRGLDC. The disordered stretch occupies residues 79-99; the sequence is PPPVLLASARPSSNPLSSHED.

The protein resides in the nucleus. The chain is Putative transcription factor ecdB from Aspergillus rugulosus (Emericella rugulosa).